A 212-amino-acid polypeptide reads, in one-letter code: MKVDLTGLRREFTQSGLNRTDLDNSPFGQFNLWFEQAQKADIIEPSAMSLATSDNNEIGIRTVLLKYFDMYGFVFFTNYNSKKSKELQSNPNVALLFPWLVLERQVKISGYVEKISMLESLKYFSSRPKASQLGSWASQQSSSLSSRKVLLSQFELMKVKFSNGKVPLPDFWGGYRVVPLKIEFWQGRENRLHDRFIYQLNKGKWRIERLAP.

FMN contacts are provided by residues 61–66, 76–77, Lys-82, Lys-83, and Gln-105; these read RTVLLK and FT. Lys-66 lines the substrate pocket. Tyr-123, Arg-127, and Ser-131 together coordinate substrate. FMN-binding positions include 140–141 and Trp-185; that span reads QS. 191–193 contacts substrate; that stretch reads RLH. Arg-195 contacts FMN.

The protein belongs to the pyridoxamine 5'-phosphate oxidase family. As to quaternary structure, homodimer. It depends on FMN as a cofactor.

It carries out the reaction pyridoxamine 5'-phosphate + O2 + H2O = pyridoxal 5'-phosphate + H2O2 + NH4(+). The enzyme catalyses pyridoxine 5'-phosphate + O2 = pyridoxal 5'-phosphate + H2O2. Its pathway is cofactor metabolism; pyridoxal 5'-phosphate salvage; pyridoxal 5'-phosphate from pyridoxamine 5'-phosphate: step 1/1. It functions in the pathway cofactor metabolism; pyridoxal 5'-phosphate salvage; pyridoxal 5'-phosphate from pyridoxine 5'-phosphate: step 1/1. Catalyzes the oxidation of either pyridoxine 5'-phosphate (PNP) or pyridoxamine 5'-phosphate (PMP) into pyridoxal 5'-phosphate (PLP). The polypeptide is Pyridoxine/pyridoxamine 5'-phosphate oxidase (Vesicomyosocius okutanii subsp. Calyptogena okutanii (strain HA)).